Reading from the N-terminus, the 100-residue chain is Carboxysome shell vertex protein CcmL (100 aa).

One can recognise a BMV domain in the interval 1–83; the sequence is MQIGRVRGTV…VDAVVIGIID (83 aa).

The protein belongs to the CcmL/EutN family. CcmL subfamily. Homopentamer. Interacts with full-length CcmM.

It is found in the carboxysome. Functionally, probably forms vertices in the carboxysome, a polyhedral inclusion where RuBisCO (ribulose bisphosphate carboxylase, rbcL-rbcS) is sequestered. Has been modeled to induce curvature upon insertion into an otherwise flat hexagonal molecular layer of CcmK subunits. The sequence is that of Carboxysome shell vertex protein CcmL from Gloeobacter violaceus (strain ATCC 29082 / PCC 7421).